The primary structure comprises 399 residues: L-asparaginase-like protein GG20738 (399 aa).

The N-terminal stretch at 1–22 (MLAQSCCLRLLILLLLCKSTCS) is a signal peptide. 3 cysteine pairs are disulfide-bonded: Cys90/Cys95, Cys189/Cys205, and Cys344/Cys371.

This sequence belongs to the Ntn-hydrolase family.

The protein is L-asparaginase-like protein GG20738 of Drosophila erecta (Fruit fly).